A 236-amino-acid polypeptide reads, in one-letter code: uncharacterized protein (236 aa).

The region spanning 7–74 (RTNRRDIYLK…PKIGSFVSRV (68 aa)) is the HTH gntR-type domain. A DNA-binding region (H-T-H motif) is located at residues 34–53 (ENELAASMGVSRTPVRESLI).

This is an uncharacterized protein from Streptomyces ambofaciens.